Consider the following 492-residue polypeptide: Probable Xaa-Pro aminopeptidase ACLA_020440 (492 aa).

The Mn(2+) site is built by Asp272, Asp283, Glu421, and Glu460.

This sequence belongs to the peptidase M24B family. Requires Mn(2+) as cofactor.

The catalysed reaction is Release of any N-terminal amino acid, including proline, that is linked to proline, even from a dipeptide or tripeptide.. Catalyzes the removal of a penultimate prolyl residue from the N-termini of peptides. The chain is Probable Xaa-Pro aminopeptidase ACLA_020440 from Aspergillus clavatus (strain ATCC 1007 / CBS 513.65 / DSM 816 / NCTC 3887 / NRRL 1 / QM 1276 / 107).